The chain runs to 936 residues: Aftiphilin (936 aa).

The disordered stretch occupies residues 1–36 (MEPDIIRMYSSSPPPLDNGAEDDDDDEFGEFGGFSE). Positions 1–523 (MEPDIIRMYS…ARKSSGTGTE (523 aa)) are interaction with AP1G1, AP1G2, GGA1 and GGA3. The span at 19 to 29 (GAEDDDDDEFG) shows a compositional bias: acidic residues. A WXXF motif 1 motif is present at residues 28 to 31 (FGEF). A Phosphoserine modification is found at Ser151. Disordered stretches follow at residues 197 to 216 (TDDLDNVADSKGRKPLSTHS) and 374 to 409 (KTSDDEVGSPKEESRKFTNFQSPNIDPTEENDLDDS). The segment covering 374 to 389 (KTSDDEVGSPKEESRK) has biased composition (basic and acidic residues). Positions 386-610 (ESRKFTNFQS…EAWQSHRTDE (225 aa)) are interaction with AP1G1. At Ser395 the chain carries Phosphoserine. Positions 432 to 435 (FGDF) match the WXXF motif 2 motif. The short motif at 436–438 (GDF) is the WXXF motif 3 (partial) element. The short motif at 478-481 (FGEF) is the WXXF motif 4 element. Ser518 carries the post-translational modification Phosphoserine. The segment at 589–637 (GDQQATESHHRKEAWQSHRTDENIDTPGTPKTHSVPSATSKGAVASGHL) is disordered. Residues 595–610 (ESHHRKEAWQSHRTDE) are compositionally biased toward basic and acidic residues. Position 617 is a phosphothreonine (Thr617). Over residues 617 to 628 (TPKTHSVPSATS) the composition is skewed to polar residues. A CLTCL1/Clathrin-binding motif is present at residues 716–718 (YQW). Residues 825–829 (LLNLD) are clathrin-binding.

Self-associates. Interacts with GGA1 (via GAE domain). Interacts with GGA3 (via GAE domain), AP1G1 (via GAE domain) and AP1G2 (via GAE domain). Component of the aftiphilin/p200/gamma-synergin complex, at least composed of AFTPH/aftiphilin, HEATR5B/p200a and SYNRG/gamma-synergin, which plays a role in the AP1G1/AP-1-mediated protein trafficking from early to recycling endosomes. Within the complex interacts with HEATR5B/p200a and SYNRG/gamma-synergin; the interactions are direct. Interacts with AP1G1/AP-1; the interaction is required to recruit AFTPH/aftiphilin to the perinuclear region of the cell. Interacts with CLTCL1/Clathrin.

It localises to the cytoplasm. The protein localises to the perinuclear region. The protein resides in the cytoplasmic vesicle. It is found in the clathrin-coated vesicle. Functionally, component of clathrin-coated vesicles. Component of the aftiphilin/p200/gamma-synergin complex, which plays roles in AP1G1/AP-1-mediated protein trafficking including the trafficking of transferrin from early to recycling endosomes, and the membrane trafficking of furin and the lysosomal enzyme cathepsin D between the trans-Golgi network (TGN) and endosomes. The polypeptide is Aftiphilin (AFTPH) (Homo sapiens (Human)).